Consider the following 351-residue polypeptide: DNA polymerase IV (351 aa).

A UmuC domain is found at 4-185 (IIHVDMDCFF…LPLAKIPGVG (182 aa)). Positions 8 and 103 each coordinate Mg(2+). The active site involves E104.

It belongs to the DNA polymerase type-Y family. As to quaternary structure, monomer. The cofactor is Mg(2+).

The protein localises to the cytoplasm. The enzyme catalyses DNA(n) + a 2'-deoxyribonucleoside 5'-triphosphate = DNA(n+1) + diphosphate. Functionally, poorly processive, error-prone DNA polymerase involved in untargeted mutagenesis. Copies undamaged DNA at stalled replication forks, which arise in vivo from mismatched or misaligned primer ends. These misaligned primers can be extended by PolIV. Exhibits no 3'-5' exonuclease (proofreading) activity. May be involved in translesional synthesis, in conjunction with the beta clamp from PolIII. The chain is DNA polymerase IV from Escherichia coli O157:H7.